Consider the following 340-residue polypeptide: uncharacterized protein (340 aa).

Positions 58–307 (AALPFRYTVN…PSYREMLRER (250 aa)) constitute a Radical SAM core domain. 3 residues coordinate [4Fe-4S] cluster: Cys-72, Cys-76, and Cys-79. Helical transmembrane passes span 140-160 (YALM…LSIL) and 243-263 (QLLG…GLHL).

The cofactor is [4Fe-4S] cluster.

It localises to the cell membrane. This is an uncharacterized protein from Mycobacterium tuberculosis (strain CDC 1551 / Oshkosh).